A 225-amino-acid polypeptide reads, in one-letter code: Cardiotrophin-like cytokine factor 1 (225 aa).

A signal peptide spans 1-27; it reads MDLRAGDSWGMLACLCTVLWHLPAVPA. Residue Asn-29 is glycosylated (N-linked (GlcNAc...) asparagine).

It belongs to the IL-6 superfamily. As to quaternary structure, forms a heteromeric complex with cardiotrophin-like cytokine CRLF1/CLF-1; the CRLF1-CLCF1 complex is a ligand for the ciliary neurotrophic factor receptor/CNTFR. The CRLF1-CLCF1 heterodimer binds SORL1 (via N-terminal ectodomain); within this complex, the interaction is mediated predominantly by the CRLF1 moiety. The tripartite signaling complex formed by CRLF1, CLCF1 and CNTFR also binds SORL1.

It is found in the secreted. In terms of biological role, in complex with CRLF1, forms a heterodimeric neurotropic cytokine that plays a crucial role during neuronal development. Also stimulates B-cells. Binds to and activates the ILST/gp130 receptor. This Mus musculus (Mouse) protein is Cardiotrophin-like cytokine factor 1 (Clcf1).